We begin with the raw amino-acid sequence, 189 residues long: Mediator of RNA polymerase II transcription subunit 21 (189 aa).

The disordered stretch occupies residues 50–102 (KIPKNSTAPPVPAGAPVPSQSSPPPPQTQRGASEAAADPNLPPAPDSPRTFAS). The segment covering 58 to 76 (PPVPAGAPVPSQSSPPPPQ) has biased composition (pro residues). A coiled-coil region spans residues 127-170 (GIDSSEAEQEKRIRELEAELRGVEEEREAKIRELRTLGRTLERV).

This sequence belongs to the Mediator complex subunit 21 family. In terms of assembly, component of the Mediator complex.

The protein localises to the nucleus. In terms of biological role, component of the Mediator complex, a coactivator involved in the regulated transcription of nearly all RNA polymerase II-dependent genes. Mediator functions as a bridge to convey information from gene-specific regulatory proteins to the basal RNA polymerase II transcription machinery. Mediator is recruited to promoters by direct interactions with regulatory proteins and serves as a scaffold for the assembly of a functional preinitiation complex with RNA polymerase II and the general transcription factors. This is Mediator of RNA polymerase II transcription subunit 21 (srb7) from Aspergillus clavatus (strain ATCC 1007 / CBS 513.65 / DSM 816 / NCTC 3887 / NRRL 1 / QM 1276 / 107).